Here is a 94-residue protein sequence, read N- to C-terminus: PqqA binding protein (94 aa).

It belongs to the PqqD family. Monomer. Interacts with PqqE.

Its pathway is cofactor biosynthesis; pyrroloquinoline quinone biosynthesis. Functionally, functions as a PqqA binding protein and presents PqqA to PqqE, in the pyrroloquinoline quinone (PQQ) biosynthetic pathway. In Pseudomonas savastanoi pv. phaseolicola (strain 1448A / Race 6) (Pseudomonas syringae pv. phaseolicola (strain 1448A / Race 6)), this protein is PqqA binding protein.